The following is a 528-amino-acid chain: DEAD-box ATP-dependent RNA helicase CshA (528 aa).

Residues 2–30 (TTFRELGLSDSLLQSVESMGFEEATPIQA) carry the Q motif motif. The Helicase ATP-binding domain occupies 33–203 (IPHALQGKDI…ERFMTEPQHI (171 aa)). ATP is bound at residue 46-53 (AQTGTGKT). The DEAD box motif lies at 151 to 154 (DEAD). In terms of domain architecture, Helicase C-terminal spans 214 to 374 (NIQQFYLEVQ…RMDAPTLDEA (161 aa)). The interval 428 to 528 (TTPIALTSEP…RKHHSRKPQA (101 aa)) is disordered. Over residues 458–506 (DGNRNRSRDGRGGDGRNRDRNRDGRNRDGNRDRNREGSRDGNRGRRGEG) the composition is skewed to basic and acidic residues. Basic residues predominate over residues 518–528 (ERKHHSRKPQA).

This sequence belongs to the DEAD box helicase family. CshA subfamily. In terms of assembly, oligomerizes, may be a member of the RNA degradosome.

The protein localises to the cytoplasm. It carries out the reaction ATP + H2O = ADP + phosphate + H(+). In terms of biological role, DEAD-box RNA helicase possibly involved in RNA degradation. Unwinds dsRNA in both 5'- and 3'-directions, has RNA-dependent ATPase activity. The sequence is that of DEAD-box ATP-dependent RNA helicase CshA from Bacillus thuringiensis (strain Al Hakam).